A 753-amino-acid chain; its full sequence is Taperin (753 aa).

A disordered region spans residues 141–348 (FDSPAAPRRR…IRPSSKPDME (208 aa)). Positions 182–197 (PAPPVLPSQPAPPISP) are enriched in pro residues. Composition is skewed to polar residues over residues 230-239 (LQKTGSNSFT) and 250-263 (VNRS…TQES). Serine 274 is modified (phosphoserine). Residues 300 to 322 (TPSATPVGPPAFLAPSPASATPS) show a composition bias toward low complexity. The span at 323–335 (QRQWVSSATSAND) shows a compositional bias: polar residues. Residues 337 to 347 (FEIRPSSKPDM) are compositionally biased toward basic and acidic residues. 3 positions are modified to phosphoserine: serine 402, serine 458, and serine 502. The disordered stretch occupies residues 438–488 (GCPRPAISDTDKSVRRQRPASPPPFLPATTEAEPAEGLGVPGLTKNGQEPV). 2 disordered regions span residues 544–583 (FTVV…SGPH) and 637–676 (FEYP…DSEK). The span at 559-571 (HLSQTNGQFQQGA) shows a compositional bias: polar residues. A compositionally biased stretch (acidic residues) spans 648–672 (EEAEEEEEEEEEEEGEDGEEEEVGP).

Belongs to the taperin family. Interacts with GRXCR2; the interaction restricts TPRN to the stereocilum basal region. Interacts with actin ACTB; the interaction may stabilize stereocilia. Interacts with CLIC5. Interacts with PTPRQ. TPRN, CLIC5 and PTPQR form concentric rings at the base of stereocilia and may form a complex. Interacts with phosphatase PPP1CA; the interaction results in inhibition of PPC1A phosphatase activity. Interacts with DNA damage response proteins XRCC6/KU70, XRCC5/KU80, PARP1, TOP1 and TOP2A; these interactions recruit TPRN to sites of DNA damage where it may play a role in DNA repair.

The protein localises to the cell projection. Its subcellular location is the stereocilium. The protein resides in the microvillus. It localises to the nucleus. It is found in the nucleoplasm. The protein localises to the cytoplasm. In terms of biological role, essential for hearing. Required for maintenance of stereocilia on both inner and outer hair cells. Necessary for the integrity of the stereociliary rootlet. May act as an actin cytoskeleton regulator involved in the regulation of actin dynamics at the pointed end in hair cells. Forms rings at the base of stereocilia and binds actin filaments in the stereocilia which may stabilize the stereocilia. Acts as a strong inhibitor of PPP1CA phosphatase activity. Recruited to sites of DNA damage and may play a role in DNA damage repair. This is Taperin (Tprn) from Rattus norvegicus (Rat).